Consider the following 200-residue polypeptide: ATP-dependent Clp protease proteolytic subunit 1 (200 aa).

Serine 98 serves as the catalytic Nucleophile. Histidine 123 is a catalytic residue.

Belongs to the peptidase S14 family. In terms of assembly, fourteen ClpP subunits assemble into 2 heptameric rings which stack back to back to give a disk-like structure with a central cavity, resembling the structure of eukaryotic proteasomes.

The protein resides in the cytoplasm. The enzyme catalyses Hydrolysis of proteins to small peptides in the presence of ATP and magnesium. alpha-casein is the usual test substrate. In the absence of ATP, only oligopeptides shorter than five residues are hydrolyzed (such as succinyl-Leu-Tyr-|-NHMec, and Leu-Tyr-Leu-|-Tyr-Trp, in which cleavage of the -Tyr-|-Leu- and -Tyr-|-Trp bonds also occurs).. Its function is as follows. Cleaves peptides in various proteins in a process that requires ATP hydrolysis. Has a chymotrypsin-like activity. Plays a major role in the degradation of misfolded proteins. The polypeptide is ATP-dependent Clp protease proteolytic subunit 1 (Mycobacterium bovis (strain ATCC BAA-935 / AF2122/97)).